A 508-amino-acid polypeptide reads, in one-letter code: Transcriptional regulatory protein moc3 (508 aa).

A disordered region spans residues 15–43; that stretch reads NRTGSINSNPLYIPNPNVEPTPKPTKRRT. A DNA-binding region (zn(2)-C6 fungal-type) is located at residues 46–76; that stretch reads GCLTCRRRRIKCDETKPFCLNCTKTNRECEG. 2 disordered regions span residues 110–146 and 174–193; these read ASSS…STVT and NHNV…KPSV. Low complexity predominate over residues 176–193; that stretch reads NVPTNNSSSATSSTKPSV.

As to quaternary structure, interacts with zfs1.

It is found in the nucleus. Its function is as follows. Induces sexual development and ascus formation. Also involved in calcium homeostasis. The protein is Transcriptional regulatory protein moc3 (moc3) of Schizosaccharomyces pombe (strain 972 / ATCC 24843) (Fission yeast).